The sequence spans 138 residues: ATP synthase epsilon chain (138 aa).

The protein belongs to the ATPase epsilon chain family. F-type ATPases have 2 components, CF(1) - the catalytic core - and CF(0) - the membrane proton channel. CF(1) has five subunits: alpha(3), beta(3), gamma(1), delta(1), epsilon(1). CF(0) has three main subunits: a, b and c.

It is found in the cell inner membrane. In terms of biological role, produces ATP from ADP in the presence of a proton gradient across the membrane. This Vesicomyosocius okutanii subsp. Calyptogena okutanii (strain HA) protein is ATP synthase epsilon chain.